Consider the following 527-residue polypeptide: Calcium and calcium/calmodulin-dependent serine/threonine-protein kinase (527 aa).

Positions 12–314 (YEVSEILGRG…AQELLSDPWV (303 aa)) constitute a Protein kinase domain. 18–26 (LGRGGFSVV) contributes to the ATP binding site. Residues 25-51 (VVRKGTRKSNNDDEKSQSQSKSQSQSQ) form a disordered region. Residues 41 to 51 (QSQSKSQSQSQ) are compositionally biased toward low complexity. Residue K55 coordinates ATP. The disordered stretch occupies residues 59–78 (RLGTSNNLPRKKDGGENSTE). D179 functions as the Proton acceptor in the catalytic mechanism. Residues 239-255 (MWSLGVILYILLSGYPP) form a helical membrane-spanning segment. T279 carries the phosphothreonine modification. Residues 337–350 (ARRKLRAAAIASVW) form a calmodulin-binding region. A coiled-coil region spans residues 358 to 379 (TKKLKSLVGSYDLKEDEIENLR). EF-hand domains are found at residues 408-443 (SLIP…LKNS), 444-479 (KGED…LPYD), and 486-521 (TEPG…DSSL). Ca(2+) is bound by residues D421, N423, D425, T427, E432, D457, D459, S461, C463, E468, D499, N501, D503, K505, and E510.

The protein belongs to the protein kinase superfamily. CAMK Ser/Thr protein kinase family. CaMK subfamily. Post-translationally, autophosphorylation.

It localises to the membrane. The enzyme catalyses L-seryl-[protein] + ATP = O-phospho-L-seryl-[protein] + ADP + H(+). It carries out the reaction L-threonyl-[protein] + ATP = O-phospho-L-threonyl-[protein] + ADP + H(+). Its activity is regulated as follows. Activated by calcium. Autophosphorylation may play an important role in the regulation of the kinase activity. Functionally, protein kinase that recognizes the calcium spiking induced by Nod factors and translates this signal to components controlling nodulation and mycorrhizal infection responses. The protein is Calcium and calcium/calmodulin-dependent serine/threonine-protein kinase (SYM9) of Pisum sativum (Garden pea).